The primary structure comprises 960 residues: Cyclin-dependent kinase-like 5 (960 aa).

Positions 13-297 constitute a Protein kinase domain; that stretch reads FEILGVVGEG…TEQCLNHPTF (285 aa). ATP contacts are provided by residues 19-27 and lysine 42; that span reads VGEGAYGVV. The active-site Proton acceptor is the aspartate 135. Disordered stretches follow at residues 300–349, 382–566, 646–834, and 848–960; these read QRLL…IQNL, KTYQ…RHSK, SPQP…TQSQ, and ASNH…ETAL. Polar residues-rich tracts occupy residues 319–336 and 382–402; these read ESSTLSNRNQAGKSTALQ and KTYQASSQPGSTSKDLTNNNI. Serine 407 carries the post-translational modification Phosphoserine. The span at 407-417 shows a compositional bias: basic and acidic residues; sequence SPKEAKSKTEF. Composition is skewed to polar residues over residues 434-462, 473-482, and 510-548; these read LKSNSRSQQNRHSFMESSQSKAGTLQPNE, IPQSSRSPSY, and EPSTSRYFPSSCLDLNSPTSPTPTRHSDTRTLLSPSGRN. Phosphoserine is present on serine 479. Basic and acidic residues-rich tracts occupy residues 549–559 and 679–704; these read NRNEGTLDSRR and QKSEGGVYHDPHSDDGTAPKENRHLY. Serine 720 is modified (phosphoserine). A compositionally biased stretch (polar residues) spans 728–748; the sequence is HENNVSTRVSSLPSESSSGTN. At serine 761 the chain carries Phosphoserine. The span at 769–778 shows a compositional bias: basic and acidic residues; it reads EQLKEKEKQG. The span at 791 to 816 shows a compositional bias: polar residues; the sequence is QTVPNSDSPDLLTLQKSIHSASTPSS. Basic and acidic residues predominate over residues 817 to 827; it reads RPKEWRPEKIS. 3 stretches are compositionally biased toward polar residues: residues 862–872, 880–890, and 914–928; these read LTAQQTKNSFS, SQASGGSSNIR, and SSVTRSATEGPSYSE.

The protein belongs to the protein kinase superfamily. CMGC Ser/Thr protein kinase family. CDC2/CDKX subfamily. As to quaternary structure, interacts with MECP2. In terms of processing, autophosphorylated. Expressed in brain, lung, kidney, prostate, ovary, placenta, pancreas and testis. As to expression, predominant transcript in brain.

It localises to the nucleus. The protein resides in the cytoplasm. It is found in the cytoskeleton. Its subcellular location is the cilium basal body. The protein localises to the microtubule organizing center. It localises to the centrosome. The catalysed reaction is L-seryl-[protein] + ATP = O-phospho-L-seryl-[protein] + ADP + H(+). It carries out the reaction L-threonyl-[protein] + ATP = O-phospho-L-threonyl-[protein] + ADP + H(+). Functionally, mediates phosphorylation of MECP2. May regulate ciliogenesis. The sequence is that of Cyclin-dependent kinase-like 5 from Homo sapiens (Human).